Here is a 409-residue protein sequence, read N- to C-terminus: Toluene 1,2-dioxygenase system ferredoxin--NAD(+) reductase component (409 aa).

4–35 contacts FAD; the sequence is HVAIIGNGVGGFTTAQALRAEGFEGRISLIGD. 145 to 173 contributes to the NAD(+) binding site; the sequence is RLLIVGGGLIGCEVATTARKLGLSVTILE.

This sequence belongs to the bacterial ring-hydroxylating dioxygenase ferredoxin reductase family. In terms of assembly, this dioxygenase system consists of four proteins: the two subunits of the hydroxylase component (todC1 and todC2), a ferredoxin (TodB) and a ferredoxin reductase (TodA). FAD serves as cofactor.

The catalysed reaction is 2 reduced [2Fe-2S]-[ferredoxin] + NAD(+) + H(+) = 2 oxidized [2Fe-2S]-[ferredoxin] + NADH. It participates in xenobiotic degradation; toluene degradation. In terms of biological role, part of the electron transfer component of toluene 1,2-dioxygenase, transfers electrons from ferredoxin (TodB) to NADH. This chain is Toluene 1,2-dioxygenase system ferredoxin--NAD(+) reductase component (todA), found in Pseudomonas putida (Arthrobacter siderocapsulatus).